Consider the following 363-residue polypeptide: MIEHGNSTFDYRSIREVAANAGAGATAGAIAATFVCPLDVIKTRLQVLGLPEAPASGQRGGVIITSLKNIIKEEGYRGMYRGLSPTIIALLPNWAVYFSVYGKLKDVLQSSDGKLSIGSNMIAAAGAGAATSIATNPLWVVKTRLMTQGIRPGVVPYKSVMSAFSRICHEEGVRGLYSGILPSLAGVSHVAIQFPAYEKIKQYMAKMDNTSVENLSPGNVAIASSIAKVIASILTYPHEVIRAKLQEQGQIRNAETKYSGVIDCITKVFRSEGIPGLYRGCATNLLRTTPSAVITFTTYEMMLRFFRQVVPPETNRSDDRRREEERKNLVSRRGEEEDKDLGLRESQTQSNKISTPHIPLGSK.

Solcar repeat units lie at residues 15–107, 115–203, and 215–305; these read REVA…LKDV, LSIG…IKQY, and LSPG…MLRF. Helical transmembrane passes span 21–41, 82–102, 121–141, 176–196, 215–235, and 277–299; these read AGAGATAGAIAATFVCPLDVI, GLSPTIIALLPNWAVYFSVYG, MIAAAGAGAATSIATNPLWVV, LYSGILPSLAGVSHVAIQFPA, LSPGNVAIASSIAKVIASILT, and LYRGCATNLLRTTPSAVITFTTY. Residues 313-363 are disordered; that stretch reads ETNRSDDRRREEERKNLVSRRGEEEDKDLGLRESQTQSNKISTPHIPLGSK. A compositionally biased stretch (basic and acidic residues) spans 315–343; it reads NRSDDRRREEERKNLVSRRGEEEDKDLGL. Polar residues predominate over residues 345-354; the sequence is ESQTQSNKIS.

It belongs to the mitochondrial carrier (TC 2.A.29) family. In terms of tissue distribution, highly expressed in young meristematic shoot area, vascular bundles of leaves, developing siliques including the funiculi, petal veins, developing pollen and central cylinder of roots.

The protein localises to the mitochondrion membrane. With respect to regulation, inhibited by pyridoxal 5'-phosphate, bathophenanthroline, tannic acid, mersalyl, mercuric chloride, p-hydroxymercuribenzoate, p-hydroxymercuribenzoate sulfonate, bromocresol purple and N-ethylmaleimide. In terms of biological role, mediates the NAD(+) import into chloroplast. Favors the NAD(+)(in)/ADP or AMP(out) antiport exchange, but is also able to catalyze a low unidirectional transport (uniport) of NAD(+). Transports NAD(+), nicotinic acid adenine dinucleotide, nicotinamide mononucleotide, nicotinic acid mononucleotide, FAD, FMN, TTP, TDP, TMP, UTP, UDP, UMP, CTP, CDP, CMP, GTP, GDP, GMP, 3'-AMP, ATP, ADP and AMP, has low transport activity with cAMP, NADH and alpha-NAD(+), and has no activity with NADP(+), NADPH, nicotinamide, nicotinic acid, adenosine, thiamine mono- or diphosphate, inorganic phosphate, CoA, folate, NaCl, malate, malonate, citrate, fumarate, aspartate, glutamate, S-adenosylmethionine, lysine, arginine, and ornithine. This Arabidopsis thaliana (Mouse-ear cress) protein is Nicotinamide adenine dinucleotide transporter 2, mitochondrial (NDT2).